The sequence spans 1026 residues: mRNA transport homolog 4 (1026 aa).

A Helicase ATP-binding domain is found at 134–290 (ILCIDNNQSV…WVASIKQQPV (157 aa)). 147–154 (AHTSAGKT) lines the ATP pocket. Residues 238-241 (DEIH) carry the DEIH box motif. One can recognise a Helicase C-terminal domain in the interval 360–564 (NVLKIIRSVA…NMVLNLMRVE (205 aa)).

This sequence belongs to the helicase family. SKI2 subfamily.

Its subcellular location is the nucleus. This Caenorhabditis elegans protein is mRNA transport homolog 4 (mtr-4).